The sequence spans 201 residues: ATP-dependent Clp protease proteolytic subunit (201 aa).

The active-site Nucleophile is Ser-98. Residue His-123 is part of the active site.

Belongs to the peptidase S14 family. In terms of assembly, fourteen ClpP subunits assemble into 2 heptameric rings which stack back to back to give a disk-like structure with a central cavity, resembling the structure of eukaryotic proteasomes.

The protein localises to the cytoplasm. The enzyme catalyses Hydrolysis of proteins to small peptides in the presence of ATP and magnesium. alpha-casein is the usual test substrate. In the absence of ATP, only oligopeptides shorter than five residues are hydrolyzed (such as succinyl-Leu-Tyr-|-NHMec, and Leu-Tyr-Leu-|-Tyr-Trp, in which cleavage of the -Tyr-|-Leu- and -Tyr-|-Trp bonds also occurs).. Cleaves peptides in various proteins in a process that requires ATP hydrolysis. Has a chymotrypsin-like activity. Plays a major role in the degradation of misfolded proteins. In Rickettsia conorii (strain ATCC VR-613 / Malish 7), this protein is ATP-dependent Clp protease proteolytic subunit.